A 465-amino-acid polypeptide reads, in one-letter code: MQVFNTLGKRLQSFEPHEPNTVKMYVCGPTVYDEVHIGHGRTFVAFDAMSRYLRVKGYNVVRVQNITDIDDKIINKARELGKSWNEVSEYYSKSYLEHIGALKVKIDMHPKVTTHIKEIIDFVQRLIDSGHAYVANGSVYFDVDTYPGYGELSNVKKEEWDQGEEIVKEKRHPYDFALWKAYKPGEPYWESPWGKGRPGWHIECSTMSTRYLGTKIDIHGGGMDLVFPHHENERAQTESLTGSTWVKYWMHVAFLTIRKEKMSKSKGNIVPLKEALSKYGPSTLRYWFLSSQYRNPIEYSEEILEQSSRSLQRLKDAISVLRKIIQKGPAHYAKEEDVKVQEEIVRAISRFDEHMENDFDTSNALTSIHEIASIVFSKLQYSEDVFGALIALDGFRKFNEVFAVMDEEFSAELDRLTKVIDAVIEVRNYLRKKQMYDLSDQIRDILSRSGVKILDSKEGSTWRFQ.

Residue cysteine 27 participates in Zn(2+) binding. Residues proline 29–histidine 39 carry the 'HIGH' region motif. Cysteine 204, histidine 229, and glutamate 233 together coordinate Zn(2+). The 'KMSKS' region motif lies at lysine 261–serine 265. Lysine 264 is a binding site for ATP.

The protein belongs to the class-I aminoacyl-tRNA synthetase family. It depends on Zn(2+) as a cofactor.

The protein localises to the cytoplasm. The catalysed reaction is tRNA(Cys) + L-cysteine + ATP = L-cysteinyl-tRNA(Cys) + AMP + diphosphate. This is Cysteine--tRNA ligase from Metallosphaera sedula (strain ATCC 51363 / DSM 5348 / JCM 9185 / NBRC 15509 / TH2).